The following is a 1648-amino-acid chain: Kinesin-like protein KIF14 (1648 aa).

The interval 1-27 is disordered; the sequence is MSLHSTHNRNNSGDILDIPSSQNSSSL. A required for PRC1-binding region spans residues 1–356; the sequence is MSLHSTHNRN…AGKDPLKVEN (356 aa). Residues serine 12 and serine 272 each carry the phosphoserine modification. Threonine 277 carries the phosphothreonine modification. A Phosphoserine modification is found at serine 346. A required for microtubule-binding with high affinity region spans residues 356-737; the sequence is NSQVTVAVRV…AAQRNSRNID (382 aa). Residues 358–701 form the Kinesin motor domain; it reads QVTVAVRVRP…LRYANQARLI (344 aa). 447–454 lines the ATP pocket; that stretch reads GQTGSGKS. A coiled-coil region spans residues 705–791; that stretch reads AKVNEDMNAK…QETKELQKAG (87 aa). Residues 825-891 enclose the FHA domain; the sequence is TTVGKYKPNS…LRHGDRVILG (67 aa). Residues 901–1648 are required for CIT-binding; it reads PVEVQKGKRP…ECTPSRIQWV (748 aa). Residue threonine 915 is modified to Phosphothreonine. Residues 922–1079 adopt a coiled-coil conformation; sequence KDFEFAKNEL…QNRNNRDKTF (158 aa). Serine 937 and serine 1292 each carry phosphoserine. 2 coiled-coil regions span residues 1332-1348 and 1468-1500; these read TNIA…VKKL and ENIF…VNRA. Residues 1600-1648 are disordered; sequence NTKEEHQQSKSSGIDGSKNKGVPKRVYELHGSSPAVSSEECTPSRIQWV. Residues 1633–1648 are compositionally biased toward polar residues; sequence PAVSSEECTPSRIQWV.

The protein belongs to the TRAFAC class myosin-kinesin ATPase superfamily. Kinesin family. As to quaternary structure, directly interacts with PRC1 within a complex also containing KIF4A, KIF20A and KIF23; targets to the central spindle. Directly interacts with CIT depending on the activation state of the kinase (stronger interaction with the kinase-dead form); targets to the midbody. Interacts with ARRB2; the interaction is detected in the nucleus upon OR1D2 stimulation. Interacts with AKT1; the interaction is detected in the plasma membrane upon INS stimulation and promotes AKT1 phosphorylation. Interacts with SVIL; at midbody during cytokinesis. Interacts with RADIL (via PDZ domain); recruits RADIL to the microtubule network restricting RADIL from interaction with activated RAP1A.

It localises to the nucleus. It is found in the cytoplasm. The protein localises to the cytoskeleton. The protein resides in the spindle. Its subcellular location is the midbody. Microtubule motor protein that binds to microtubules with high affinity through each tubulin heterodimer and has an ATPase activity. Plays a role in many processes like cell division, cytokinesis and also in cell proliferation and apoptosis. During cytokinesis, targets to central spindle and midbody through its interaction with PRC1 and CIT respectively. Regulates cell growth through regulation of cell cycle progression and cytokinesis. During cell cycle progression acts through SCF-dependent proteasomal ubiquitin-dependent protein catabolic process which controls CDKN1B degradation, resulting in positive regulation of cyclins, including CCNE1, CCND1 and CCNB1. During late neurogenesis, regulates the cerebellar, cerebral cortex and olfactory bulb development through regulation of apoptosis, cell proliferation and cell division. Also is required for chromosome congression and alignment during mitotic cell cycle process. Regulates cell spreading, focal adhesion dynamics, and cell migration through its interaction with RADIL resulting in regulation of RAP1A-mediated inside-out integrin activation by tethering RADIL on microtubules. This chain is Kinesin-like protein KIF14, found in Homo sapiens (Human).